A 37-amino-acid polypeptide reads, in one-letter code: Esculentin-2B (37 aa).

The cysteines at positions 31 and 37 are disulfide-linked.

Belongs to the frog skin active peptide (FSAP) family. Esculentin subfamily. As to expression, expressed by the skin glands.

Its subcellular location is the secreted. In terms of biological role, shows antibacterial activity against representative Gram-negative and Gram-positive bacterial species, and hemolytic activity. The protein is Esculentin-2B of Pelophylax lessonae (Pool frog).